Reading from the N-terminus, the 349-residue chain is 4-hydroxy-3-methylbut-2-enyl diphosphate reductase (349 aa).

C18 lines the [4Fe-4S] cluster pocket. (2E)-4-hydroxy-3-methylbut-2-enyl diphosphate is bound by residues H47 and H83. H47 and H83 together coordinate dimethylallyl diphosphate. Residues H47 and H83 each coordinate isopentenyl diphosphate. Position 105 (C105) interacts with [4Fe-4S] cluster. H133 contacts (2E)-4-hydroxy-3-methylbut-2-enyl diphosphate. H133 is a binding site for dimethylallyl diphosphate. H133 is an isopentenyl diphosphate binding site. The active-site Proton donor is E135. T174 contributes to the (2E)-4-hydroxy-3-methylbut-2-enyl diphosphate binding site. C204 serves as a coordination point for [4Fe-4S] cluster. (2E)-4-hydroxy-3-methylbut-2-enyl diphosphate contacts are provided by S232, S233, N234, and S277. Dimethylallyl diphosphate-binding residues include S232, S233, N234, and S277. 4 residues coordinate isopentenyl diphosphate: S232, S233, N234, and S277.

This sequence belongs to the IspH family. [4Fe-4S] cluster serves as cofactor.

It catalyses the reaction isopentenyl diphosphate + 2 oxidized [2Fe-2S]-[ferredoxin] + H2O = (2E)-4-hydroxy-3-methylbut-2-enyl diphosphate + 2 reduced [2Fe-2S]-[ferredoxin] + 2 H(+). The catalysed reaction is dimethylallyl diphosphate + 2 oxidized [2Fe-2S]-[ferredoxin] + H2O = (2E)-4-hydroxy-3-methylbut-2-enyl diphosphate + 2 reduced [2Fe-2S]-[ferredoxin] + 2 H(+). It functions in the pathway isoprenoid biosynthesis; dimethylallyl diphosphate biosynthesis; dimethylallyl diphosphate from (2E)-4-hydroxy-3-methylbutenyl diphosphate: step 1/1. It participates in isoprenoid biosynthesis; isopentenyl diphosphate biosynthesis via DXP pathway; isopentenyl diphosphate from 1-deoxy-D-xylulose 5-phosphate: step 6/6. Functionally, catalyzes the conversion of 1-hydroxy-2-methyl-2-(E)-butenyl 4-diphosphate (HMBPP) into a mixture of isopentenyl diphosphate (IPP) and dimethylallyl diphosphate (DMAPP). Acts in the terminal step of the DOXP/MEP pathway for isoprenoid precursor biosynthesis. This chain is 4-hydroxy-3-methylbut-2-enyl diphosphate reductase, found in Bartonella bacilliformis (strain ATCC 35685 / KC583 / Herrer 020/F12,63).